Here is a 202-residue protein sequence, read N- to C-terminus: Nucleoside triphosphate pyrophosphatase (202 aa).

Residue Asp79 is the Proton acceptor of the active site.

Belongs to the Maf family. A divalent metal cation serves as cofactor.

Its subcellular location is the cytoplasm. It carries out the reaction a ribonucleoside 5'-triphosphate + H2O = a ribonucleoside 5'-phosphate + diphosphate + H(+). The catalysed reaction is a 2'-deoxyribonucleoside 5'-triphosphate + H2O = a 2'-deoxyribonucleoside 5'-phosphate + diphosphate + H(+). Functionally, nucleoside triphosphate pyrophosphatase. May have a dual role in cell division arrest and in preventing the incorporation of modified nucleotides into cellular nucleic acids. The chain is Nucleoside triphosphate pyrophosphatase from Rhodopseudomonas palustris (strain BisB18).